The chain runs to 876 residues: Xylosyltransferase oxt (876 aa).

Topologically, residues 1 to 14 (MEQSVSARWLKRYR) are cytoplasmic. A helical; Signal-anchor for type II membrane protein transmembrane segment spans residues 15–35 (AFFLILLLIVAIQLFLAYKSL). Topologically, residues 36–876 (DIVGGGSGSG…PKSDVDALLK (841 aa)) are lumenal. Positions 48–67 (AAEAPASPPPPHAQARVQPP) are disordered. Disulfide bonds link C83/C111, C127/C465, C484/C497, and C486/C495. N-linked (GlcNAc...) asparagine glycosylation is found at N131 and N135. In terms of domain architecture, WSC spans 134–228 (ANVSLGCFKD…FYAMNIYETG (95 aa)). UDP-alpha-D-xylose contacts are provided by residues D283 and 312 to 314 (TIW). A glycan (N-linked (GlcNAc...) asparagine) is linked at N342. A UDP-alpha-D-xylose-binding site is contributed by 415-416 (DW). Residues S498 and 522 to 523 (RK) contribute to the UDP-alpha-D-xylose site. N696 and N725 each carry an N-linked (GlcNAc...) asparagine glycan. C842 and C855 are joined by a disulfide.

The protein belongs to the glycosyltransferase 14 family. XylT subfamily. Ca(2+) serves as cofactor. Requires Mn(2+) as cofactor. It depends on Mg(2+) as a cofactor.

Its subcellular location is the endoplasmic reticulum membrane. The protein resides in the golgi apparatus membrane. It catalyses the reaction UDP-alpha-D-xylose + L-seryl-[protein] = 3-O-(beta-D-xylosyl)-L-seryl-[protein] + UDP + H(+). Its pathway is glycan metabolism; chondroitin sulfate biosynthesis. The protein operates within glycan metabolism; heparan sulfate biosynthesis. Catalyzes the first step in biosynthesis of glycosaminoglycan. Transfers D-xylose from UDP-D-xylose to specific serine residues of the core protein. This Drosophila melanogaster (Fruit fly) protein is Xylosyltransferase oxt.